We begin with the raw amino-acid sequence, 148 residues long: Phospholipase A2-alpha (148 aa).

The first 20 residues, 1–20, serve as a signal peptide directing secretion; that stretch reads MAAPIILFSFLLFFSVSVSA. 6 disulfide bridges follow: C38/C66, C42/C72, C47/C122, C59/C79, C78/C105, and C85/C98. Ca(2+) contacts are provided by Y58, G60, and Y63. Residue H82 is part of the active site. A Ca(2+)-binding site is contributed by D83.

The protein belongs to the phospholipase A2 family. In terms of assembly, interacts with MYB30. It depends on Ca(2+) as a cofactor. Ubiquitous but expressed at a low level.

It localises to the secreted. The protein resides in the golgi apparatus. The protein localises to the cytoplasmic vesicle. Its subcellular location is the nucleus. The enzyme catalyses a 1,2-diacyl-sn-glycero-3-phosphocholine + H2O = a 1-acyl-sn-glycero-3-phosphocholine + a fatty acid + H(+). Functionally, PA2 catalyzes the calcium-dependent hydrolysis of the 2-acyl groups in 3-sn-phosphoglycerides. Releases lysophospholipids (LPLs) and free fatty acids (FFAs) from membrane phospholipids in response to hormones and other external stimuli. Modulates the trafficking of PIN proteins to the plasma membrane. Negatively regulates MYB30 transcriptional activity and hypersensitive response control. In Arabidopsis thaliana (Mouse-ear cress), this protein is Phospholipase A2-alpha.